The sequence spans 100 residues: Large ribosomal subunit protein bL21 (100 aa).

The protein belongs to the bacterial ribosomal protein bL21 family. As to quaternary structure, part of the 50S ribosomal subunit. Contacts protein L20.

Functionally, this protein binds to 23S rRNA in the presence of protein L20. This Corynebacterium jeikeium (strain K411) protein is Large ribosomal subunit protein bL21.